Consider the following 202-residue polypeptide: Twist-related protein 1 (202 aa).

The segment covering 1-18 has biased composition (low complexity); it reads MMQDVSSSPVSPADDSLS. The disordered stretch occupies residues 1 to 105; that stretch reads MMQDVSSSPV…GGGSPQSYEE (105 aa). Residues 34-43 show a composition bias toward basic residues; that stretch reads RGGRKRRSSR. Gly residues-rich tracts occupy residues 46-65 and 80-99; these read AGGG…GGDE and GCGG…GGGS. The region spanning 108-159 is the bHLH domain; sequence TQRVMANVRERQRTQSLNEAFAALRKIIPTLPSDKLSKIQTLKLAARYIDFL. A sufficient for transactivation activity region spans residues 161–191; it reads QVLQSDELDSKMASCSYVAHERLSYAFSVWR.

In terms of assembly, efficient DNA binding requires dimerization with another bHLH protein. Homodimer or heterodimer with E proteins such as TCF3. ID1 binds preferentially to TCF3 but does not interact efficiently with TWIST1 so ID1 levels control the amount of TCF3 available to dimerize with TWIST1 and thus determine the type of dimer formed. In terms of tissue distribution, subset of mesodermal cells.

Its subcellular location is the nucleus. Functionally, acts as a transcriptional regulator. Inhibits myogenesis by sequestrating E proteins, inhibiting trans-activation by MEF2, and inhibiting DNA-binding by MYOD1 through physical interaction. This interaction probably involves the basic domains of both proteins. Also represses expression of pro-inflammatory cytokines such as TNFA and IL1B. Regulates cranial suture patterning and fusion. Activates transcription as a heterodimer with E proteins. Regulates gene expression differentially, depending on dimer composition. Homodimers induce expression of FGFR2 and POSTN while heterodimers repress FGFR2 and POSTN expression and induce THBS1 expression. Heterodimerization is also required for osteoblast differentiation. Represses the activity of the circadian transcriptional activator: NPAS2-BMAL1 heterodimer. The polypeptide is Twist-related protein 1 (TWIST1) (Homo sapiens (Human)).